A 227-amino-acid polypeptide reads, in one-letter code: Cytochrome c oxidase subunit 2 (227 aa).

Residues 1–14 (MAYPFQLGLQDATS) are Mitochondrial intermembrane-facing. Residues 15 to 45 (PIMEELLHFHDHTLMIVFLISSLVLYIISSM) form a helical membrane-spanning segment. Residues 46 to 59 (LTTKLTHTSTMDAQ) are Mitochondrial matrix-facing. The chain crosses the membrane as a helical span at residues 60–87 (EVETVWTILPAIILVLIALPSLRILYMM). Over 88 to 227 (DETNNPSLTV…YFETWSALMV (140 aa)) the chain is Mitochondrial intermembrane. Residues H161, C196, E198, C200, H204, and M207 each coordinate Cu cation. A Mg(2+)-binding site is contributed by E198. Position 218 is a phosphotyrosine (Y218).

This sequence belongs to the cytochrome c oxidase subunit 2 family. As to quaternary structure, component of the cytochrome c oxidase (complex IV, CIV), a multisubunit enzyme composed of 14 subunits. The complex is composed of a catalytic core of 3 subunits MT-CO1, MT-CO2 and MT-CO3, encoded in the mitochondrial DNA, and 11 supernumerary subunits COX4I, COX5A, COX5B, COX6A, COX6B, COX6C, COX7A, COX7B, COX7C, COX8 and NDUFA4, which are encoded in the nuclear genome. The complex exists as a monomer or a dimer and forms supercomplexes (SCs) in the inner mitochondrial membrane with NADH-ubiquinone oxidoreductase (complex I, CI) and ubiquinol-cytochrome c oxidoreductase (cytochrome b-c1 complex, complex III, CIII), resulting in different assemblies (supercomplex SCI(1)III(2)IV(1) and megacomplex MCI(2)III(2)IV(2)). Found in a complex with TMEM177, COA6, COX18, COX20, SCO1 and SCO2. Interacts with TMEM177 in a COX20-dependent manner. Interacts with COX20. Interacts with COX16. Cu cation is required as a cofactor.

It localises to the mitochondrion inner membrane. It catalyses the reaction 4 Fe(II)-[cytochrome c] + O2 + 8 H(+)(in) = 4 Fe(III)-[cytochrome c] + 2 H2O + 4 H(+)(out). In terms of biological role, component of the cytochrome c oxidase, the last enzyme in the mitochondrial electron transport chain which drives oxidative phosphorylation. The respiratory chain contains 3 multisubunit complexes succinate dehydrogenase (complex II, CII), ubiquinol-cytochrome c oxidoreductase (cytochrome b-c1 complex, complex III, CIII) and cytochrome c oxidase (complex IV, CIV), that cooperate to transfer electrons derived from NADH and succinate to molecular oxygen, creating an electrochemical gradient over the inner membrane that drives transmembrane transport and the ATP synthase. Cytochrome c oxidase is the component of the respiratory chain that catalyzes the reduction of oxygen to water. Electrons originating from reduced cytochrome c in the intermembrane space (IMS) are transferred via the dinuclear copper A center (CU(A)) of subunit 2 and heme A of subunit 1 to the active site in subunit 1, a binuclear center (BNC) formed by heme A3 and copper B (CU(B)). The BNC reduces molecular oxygen to 2 water molecules using 4 electrons from cytochrome c in the IMS and 4 protons from the mitochondrial matrix. This is Cytochrome c oxidase subunit 2 (MT-CO2) from Chrysocyon brachyurus (Maned wolf).